The following is a 147-amino-acid chain: Large ribosomal subunit protein uL15 (147 aa).

Residues Met-1–Leu-57 form a disordered region. Over residues Thr-30–Gly-44 the composition is skewed to basic residues.

It belongs to the universal ribosomal protein uL15 family. As to quaternary structure, part of the 50S ribosomal subunit.

Binds to the 23S rRNA. This is Large ribosomal subunit protein uL15 from Thermotoga neapolitana (strain ATCC 49049 / DSM 4359 / NBRC 107923 / NS-E).